Reading from the N-terminus, the 89-residue chain is Small ribosomal subunit protein uS15 (89 aa).

This sequence belongs to the universal ribosomal protein uS15 family. Part of the 30S ribosomal subunit. Forms a bridge to the 50S subunit in the 70S ribosome, contacting the 23S rRNA.

Its function is as follows. One of the primary rRNA binding proteins, it binds directly to 16S rRNA where it helps nucleate assembly of the platform of the 30S subunit by binding and bridging several RNA helices of the 16S rRNA. Forms an intersubunit bridge (bridge B4) with the 23S rRNA of the 50S subunit in the ribosome. This Shewanella piezotolerans (strain WP3 / JCM 13877) protein is Small ribosomal subunit protein uS15.